Here is a 202-residue protein sequence, read N- to C-terminus: MSGRSVRAETRSRAKDDIKKVMAAIEKVRKWEKKWVTVGDTSLRIFKWVPVTDSKEKEKSKSNSSAAREPNGFPSDASANSSLLLEFQDENSNQSSVSDVYQLKVDSSTNSSPSPQQSESLSPAHTSDFRTDDSQPPTLGQEILEEPSLPSSEVADEPPTLTKEEPVPLETQVVEEEEDSGAPPLKRFCVDQPTVPQTASES.

The segment at 53–202 is disordered; sequence DSKEKEKSKS…PTVPQTASES (150 aa). Polar residues predominate over residues 90 to 99; the sequence is ENSNQSSVSD. Positions 107–123 are enriched in low complexity; it reads SSTNSSPSPQQSESLSP. Ser114, Ser118, Ser120, Ser122, Ser127, Ser148, and Ser152 each carry phosphoserine.

Belongs to the BCL7 family. As to expression, ubiquitous.

In terms of biological role, positive regulator of apoptosis. Plays a role in the Wnt signaling pathway, negatively regulating the expression of Wnt signaling components CTNNB1 and HMGA1. Involved in cell cycle progression, maintenance of the nuclear structure and stem cell differentiation. May play a role in lung tumor development or progression. The polypeptide is B-cell CLL/lymphoma 7 protein family member B (BCL7B) (Homo sapiens (Human)).